Here is a 603-residue protein sequence, read N- to C-terminus: Putative lipase atg15 (603 aa).

The Cytoplasmic portion of the chain corresponds to 1–20 (MDQPHRRTRKWHLMDLSVST). A helical; Signal-anchor for type II membrane protein membrane pass occupies residues 21 to 41 (LLMSLALVLPSCVSAYQPVYF). At 42–603 (RSQEATPFIP…ITPAPILIDL (562 aa)) the chain is on the lumenal side. Residues Asn166, Asn201, Asn223, Asn281, and Asn305 are each glycosylated (N-linked (GlcNAc...) asparagine). The Charge relay system role is filled by Ser321. Residue Asn467 is glycosylated (N-linked (GlcNAc...) asparagine).

The protein belongs to the AB hydrolase superfamily. Lipase family. As to quaternary structure, binds to both phosphatidylinositol (PI) and phosphatidylinositol 3,5-bisphosphate (PIP2).

It is found in the endosome. The protein localises to the multivesicular body membrane. Its subcellular location is the prevacuolar compartment membrane. The enzyme catalyses a triacylglycerol + H2O = a diacylglycerol + a fatty acid + H(+). Lipase which is essential for lysis of subvacuolar cytoplasm to vacuole targeted bodies and intravacuolar autophagic bodies. Involved in the lysis of intravacuolar multivesicular body (MVB) vesicles. The intravacuolar membrane disintegration by atg15 is critical to life span extension. In Emericella nidulans (strain FGSC A4 / ATCC 38163 / CBS 112.46 / NRRL 194 / M139) (Aspergillus nidulans), this protein is Putative lipase atg15 (atg15).